The sequence spans 280 residues: uncharacterized protein (280 aa).

Residues 1-35 (MQGQVLKKVLKKYVHIGMCTLFLHAILLFPCVAQA) form the signal peptide.

This is an uncharacterized protein from Treponema pallidum (strain Nichols).